A 74-amino-acid polypeptide reads, in one-letter code: Serine protease inhibitor Kazal-type 7 (74 aa).

The signal sequence occupies residues 1–17; sequence MKLLGGLLLLFTATCLC. The Kazal-like domain occupies 18–74; sequence NVDCDIYKKYPVVAIPCPIENIPVCGSDYITYGNKCKLCTEILRSNGKIQFLHEGHC. Intrachain disulfides connect Cys21/Cys56, Cys34/Cys53, and Cys42/Cys74.

Its subcellular location is the secreted. Probable serine protease inhibitor. This Rattus norvegicus (Rat) protein is Serine protease inhibitor Kazal-type 7 (Spink7).